A 282-amino-acid chain; its full sequence is 40S small subunit processome assembly factor 1 (282 aa).

2 disordered regions span residues 27-98 (YDLG…SEVP) and 121-143 (FHSRSEKRKPKSEEDKPAKNKTK). Basic and acidic residues predominate over residues 48-59 (KRDSETVADRAA). 2 positions are modified to phosphoserine: serine 67 and serine 75. A compositionally biased stretch (low complexity) spans 89–98 (SAPAAPSEVP). Over residues 131 to 143 (KSEEDKPAKNKTK) the composition is skewed to basic and acidic residues. N6-acetyllysine is present on lysine 173. Positions 208–226 (EKRTSMEEEKRAAQETDIF) are enriched in basic and acidic residues. The segment at 208–254 (EKRTSMEEEKRAAQETDIFKRKKRKGRSQEDRRSKKLAPSILSSGRA) is disordered. At serine 268 the chain carries Phosphoserine.

In terms of assembly, part of the small subunit (SSU) processome, composed of more than 70 proteins and the RNA chaperone small nucleolar RNA (snoRNA) U3.

The protein localises to the chromosome. It is found in the nucleus. The protein resides in the nucleolus. In terms of biological role, part of the small subunit (SSU) processome, first precursor of the small eukaryotic ribosomal subunit. During the assembly of the SSU processome in the nucleolus, many ribosome biogenesis factors, an RNA chaperone and ribosomal proteins associate with the nascent pre-rRNA and work in concert to generate RNA folding, modifications, rearrangements and cleavage as well as targeted degradation of pre-ribosomal RNA by the RNA exosome. Prevents helicase DHX37 to be recruited before post-A1 state. The sequence is that of 40S small subunit processome assembly factor 1 from Rattus norvegicus (Rat).